The chain runs to 419 residues: UDP-N-acetylglucosamine 1-carboxyvinyltransferase (419 aa).

22-23 (KN) lines the phosphoenolpyruvate pocket. R91 is a UDP-N-acetyl-alpha-D-glucosamine binding site. Catalysis depends on C115, which acts as the Proton donor. C115 carries the 2-(S-cysteinyl)pyruvic acid O-phosphothioketal modification. UDP-N-acetyl-alpha-D-glucosamine-binding positions include 120 to 124 (RPVDL), 160 to 163 (KVSV), D305, and V327.

It belongs to the EPSP synthase family. MurA subfamily.

It is found in the cytoplasm. The enzyme catalyses phosphoenolpyruvate + UDP-N-acetyl-alpha-D-glucosamine = UDP-N-acetyl-3-O-(1-carboxyvinyl)-alpha-D-glucosamine + phosphate. It participates in cell wall biogenesis; peptidoglycan biosynthesis. Its function is as follows. Cell wall formation. Adds enolpyruvyl to UDP-N-acetylglucosamine. This Escherichia coli (strain K12 / MC4100 / BW2952) protein is UDP-N-acetylglucosamine 1-carboxyvinyltransferase.